Reading from the N-terminus, the 633-residue chain is GTPase-GDP dissociation stimulator BEM4 (633 aa).

In terms of assembly, interacts with CDC42; the interaction is direct. Interacts with RHO1; the interaction is direct. Interacts with RHO2. Interacts with RHO4. Interacts with CDC11.

Its subcellular location is the nucleus. It localises to the cytoplasm. In terms of biological role, probably acts as a GEF (guanine nucleotide exchange factor) for the Rho family of small GTP-binding proteins (G proteins) that stimulates the dissociation of GDP to enable subsequent binding of GTP. May also chaperone the processing and/or trafficking of small GTPases independently of GEF activity. Involved in the control of polarized cell growth via CDC42-mediated signaling. Involved in the control of cell-wall organization via RHO1-mediated signaling. May also function via RHO2 and RHO4. The sequence is that of GTPase-GDP dissociation stimulator BEM4 from Saccharomyces cerevisiae (strain ATCC 204508 / S288c) (Baker's yeast).